A 202-amino-acid polypeptide reads, in one-letter code: Protein-methionine-sulfoxide reductase heme-binding subunit MsrQ (202 aa).

6 helical membrane-spanning segments follow: residues 8–28 (LAVF…AWIF), 42–62 (LGLG…LQKL), 75–95 (LGLW…VFIL), 110–130 (PYII…ITSN), 147–167 (LVYL…RADL), and 169–189 (EWTL…PSIA).

It belongs to the MsrQ family. As to quaternary structure, heterodimer of a catalytic subunit (MsrP) and a heme-binding subunit (MsrQ). FMN is required as a cofactor. The cofactor is heme b.

It localises to the cell inner membrane. Part of the MsrPQ system that repairs oxidized periplasmic proteins containing methionine sulfoxide residues (Met-O), using respiratory chain electrons. Thus protects these proteins from oxidative-stress damage caused by reactive species of oxygen and chlorine generated by the host defense mechanisms. MsrPQ is essential for the maintenance of envelope integrity under bleach stress, rescuing a wide series of structurally unrelated periplasmic proteins from methionine oxidation. MsrQ provides electrons for reduction to the reductase catalytic subunit MsrP, using the quinone pool of the respiratory chain. The protein is Protein-methionine-sulfoxide reductase heme-binding subunit MsrQ of Pseudomonas paraeruginosa (strain DSM 24068 / PA7) (Pseudomonas aeruginosa (strain PA7)).